Here is a 364-residue protein sequence, read N- to C-terminus: UDP-N-acetylglucosamine--N-acetylmuramyl-(pentapeptide) pyrophosphoryl-undecaprenol N-acetylglucosamine transferase (364 aa).

Residues 10-12, Asn124, Ser195, Ile250, and Gln295 contribute to the UDP-N-acetyl-alpha-D-glucosamine site; that span reads TGG.

It belongs to the glycosyltransferase 28 family. MurG subfamily.

It localises to the cell membrane. The catalysed reaction is Mur2Ac(oyl-L-Ala-gamma-D-Glu-L-Lys-D-Ala-D-Ala)-di-trans,octa-cis-undecaprenyl diphosphate + UDP-N-acetyl-alpha-D-glucosamine = beta-D-GlcNAc-(1-&gt;4)-Mur2Ac(oyl-L-Ala-gamma-D-Glu-L-Lys-D-Ala-D-Ala)-di-trans,octa-cis-undecaprenyl diphosphate + UDP + H(+). The protein operates within cell wall biogenesis; peptidoglycan biosynthesis. In terms of biological role, cell wall formation. Catalyzes the transfer of a GlcNAc subunit on undecaprenyl-pyrophosphoryl-MurNAc-pentapeptide (lipid intermediate I) to form undecaprenyl-pyrophosphoryl-MurNAc-(pentapeptide)GlcNAc (lipid intermediate II). The protein is UDP-N-acetylglucosamine--N-acetylmuramyl-(pentapeptide) pyrophosphoryl-undecaprenol N-acetylglucosamine transferase of Levilactobacillus brevis (strain ATCC 367 / BCRC 12310 / CIP 105137 / JCM 1170 / LMG 11437 / NCIMB 947 / NCTC 947) (Lactobacillus brevis).